We begin with the raw amino-acid sequence, 592 residues long: Ferric-chelate reductase 1 (592 aa).

Residues 2-22 (AAPQITLSVLVIALLTCSVTA) form a helical membrane-spanning segment. A Reelin domain is found at 13 to 179 (IALLTCSVTA…FTTPKATTQP (167 aa)). Asparagine 85, asparagine 308, asparagine 321, and asparagine 353 each carry an N-linked (GlcNAc...) asparagine glycan. One can recognise a DOMON domain in the interval 216 to 331 (EPACVFLSFT…ESYYIFFAEG (116 aa)). The region spanning 335 to 534 (DGRIFRHSQQ…IGTEVILEIH (200 aa)) is the Cytochrome b561 domain. The helical transmembrane segment at 372–392 (AHGALMFVAWMTTVSIGVLVA) threads the bilayer. Heme b is bound by residues histidine 373 and histidine 414. Transmembrane regions (helical) follow at residues 415–435 (RMLMVATSLLTCVAFVLPFVY), 446–466 (HPYLGCTVMTLAVLQPLLATF), 477–499 (VFNWTHWSVGTAARIIAVAAMFL), 515–535 (YAMMGFVVWHIGTEVILEIHA), and 569–589 (VVLAVYICGNVIFLSIFLSAI). Heme b contacts are provided by histidine 446 and histidine 482.

Belongs to the FRRS1 family. Heme b is required as a cofactor. Expressed in spleen, liver and kidney with low expression in brain. Localizes in adult brain to the choroid plexus of the fourth, third, and lateral ventricles and to ependymal cells that line the ventricles.

It is found in the membrane. Ferric-chelate reductases reduce Fe(3+) to Fe(2+) before its transport from the endosome to the cytoplasm. The chain is Ferric-chelate reductase 1 (FRRS1) from Mus musculus (Mouse).